The sequence spans 306 residues: Lipoyl synthase 2 (306 aa).

[4Fe-4S] cluster is bound by residues Cys-49, Cys-54, Cys-60, Cys-75, Cys-79, Cys-82, and Ser-300. Residues 61–289 (YAAGTATFLL…AEVACKLGFA (229 aa)) form the Radical SAM core domain.

It belongs to the radical SAM superfamily. Lipoyl synthase family. It depends on [4Fe-4S] cluster as a cofactor.

The protein resides in the cytoplasm. The enzyme catalyses [[Fe-S] cluster scaffold protein carrying a second [4Fe-4S](2+) cluster] + N(6)-octanoyl-L-lysyl-[protein] + 2 oxidized [2Fe-2S]-[ferredoxin] + 2 S-adenosyl-L-methionine + 4 H(+) = [[Fe-S] cluster scaffold protein] + N(6)-[(R)-dihydrolipoyl]-L-lysyl-[protein] + 4 Fe(3+) + 2 hydrogen sulfide + 2 5'-deoxyadenosine + 2 L-methionine + 2 reduced [2Fe-2S]-[ferredoxin]. It participates in protein modification; protein lipoylation via endogenous pathway; protein N(6)-(lipoyl)lysine from octanoyl-[acyl-carrier-protein]: step 2/2. Catalyzes the radical-mediated insertion of two sulfur atoms into the C-6 and C-8 positions of the octanoyl moiety bound to the lipoyl domains of lipoate-dependent enzymes, thereby converting the octanoylated domains into lipoylated derivatives. The sequence is that of Lipoyl synthase 2 from Prochlorococcus marinus (strain MIT 9313).